The chain runs to 95 residues: Bombyxin C-2 (95 aa).

A signal peptide spans 1 to 19 (MKLVILLVVVSAMLVLGGA). At glutamine 20 the chain carries Pyrrolidone carboxylic acid. 3 disulfides stabilise this stretch: cysteine 27–cysteine 76, cysteine 39–cysteine 89, and cysteine 75–cysteine 80. Positions 47–67 (SGSQYAGYGWPWLPPFSSSRG) are cleaved as a propeptide — c peptide like.

This sequence belongs to the insulin family. Heterodimer of a B chain and an A chain linked by two disulfide bonds.

The protein localises to the secreted. Brain peptide responsible for activation of prothoracic glands to produce ecdysone in insects. This is Bombyxin C-2 (BBXC2) from Bombyx mori (Silk moth).